A 429-amino-acid chain; its full sequence is Adenylosuccinate synthetase (429 aa).

GTP-binding positions include G12–K18 and G40–T42. Catalysis depends on D13, which acts as the Proton acceptor. D13 and G40 together coordinate Mg(2+). Residues D13 to K16, N38 to H41, T128, R142, Q223, T238, and R302 contribute to the IMP site. The active-site Proton donor is the H41. T298–R304 is a binding site for substrate. GTP is bound by residues R304, S330 to D332, and S412 to G414.

This sequence belongs to the adenylosuccinate synthetase family. Homodimer. Requires Mg(2+) as cofactor.

It is found in the cytoplasm. It catalyses the reaction IMP + L-aspartate + GTP = N(6)-(1,2-dicarboxyethyl)-AMP + GDP + phosphate + 2 H(+). The protein operates within purine metabolism; AMP biosynthesis via de novo pathway; AMP from IMP: step 1/2. Its function is as follows. Plays an important role in the de novo pathway of purine nucleotide biosynthesis. Catalyzes the first committed step in the biosynthesis of AMP from IMP. This Bacillus cereus (strain ATCC 10987 / NRS 248) protein is Adenylosuccinate synthetase.